Reading from the N-terminus, the 360-residue chain is Peptide chain release factor 1 (360 aa).

Position 236 is an N5-methylglutamine (glutamine 236). The segment at 288 to 308 is disordered; the sequence is QDEQDAERKSTIGTGDRSERI. Residues 293–308 are compositionally biased toward basic and acidic residues; the sequence is AERKSTIGTGDRSERI.

This sequence belongs to the prokaryotic/mitochondrial release factor family. Methylated by PrmC. Methylation increases the termination efficiency of RF1.

It is found in the cytoplasm. Its function is as follows. Peptide chain release factor 1 directs the termination of translation in response to the peptide chain termination codons UAG and UAA. This Streptococcus equi subsp. equi (strain 4047) protein is Peptide chain release factor 1.